The chain runs to 119 residues: Ribonuclease P protein component (119 aa).

This sequence belongs to the RnpA family. In terms of assembly, consists of a catalytic RNA component (M1 or rnpB) and a protein subunit.

It catalyses the reaction Endonucleolytic cleavage of RNA, removing 5'-extranucleotides from tRNA precursor.. RNaseP catalyzes the removal of the 5'-leader sequence from pre-tRNA to produce the mature 5'-terminus. It can also cleave other RNA substrates such as 4.5S RNA. The protein component plays an auxiliary but essential role in vivo by binding to the 5'-leader sequence and broadening the substrate specificity of the ribozyme. The chain is Ribonuclease P protein component from Streptococcus mutans serotype c (strain ATCC 700610 / UA159).